Here is a 199-residue protein sequence, read N- to C-terminus: Large ribosomal subunit protein bL9 (199 aa).

Residues 149 to 166 (AEAERINRGEDINSRQED) are compositionally biased toward basic and acidic residues. A disordered region spans residues 149-199 (AEAERINRGEDINSRQEDQDAAAEAIAAAGEFFDPEAQDETPETEAASEQQ). Residues 181–191 (FDPEAQDETPE) show a composition bias toward acidic residues.

This sequence belongs to the bacterial ribosomal protein bL9 family.

In terms of biological role, binds to the 23S rRNA. The sequence is that of Large ribosomal subunit protein bL9 from Afipia carboxidovorans (strain ATCC 49405 / DSM 1227 / KCTC 32145 / OM5) (Oligotropha carboxidovorans).